Here is a 354-residue protein sequence, read N- to C-terminus: Uroporphyrinogen decarboxylase (354 aa).

Residues 27 to 31, Phe46, Asp77, Tyr154, Thr209, and His327 each bind substrate; that span reads RQAGR.

This sequence belongs to the uroporphyrinogen decarboxylase family. As to quaternary structure, homodimer.

It is found in the cytoplasm. It catalyses the reaction uroporphyrinogen III + 4 H(+) = coproporphyrinogen III + 4 CO2. It functions in the pathway porphyrin-containing compound metabolism; protoporphyrin-IX biosynthesis; coproporphyrinogen-III from 5-aminolevulinate: step 4/4. Functionally, catalyzes the decarboxylation of four acetate groups of uroporphyrinogen-III to yield coproporphyrinogen-III. This chain is Uroporphyrinogen decarboxylase, found in Pseudomonas putida (strain ATCC 47054 / DSM 6125 / CFBP 8728 / NCIMB 11950 / KT2440).